Reading from the N-terminus, the 230-residue chain is Ion-translocating oxidoreductase complex subunit E (230 aa).

The next 6 membrane-spanning stretches (helical) occupy residues 18 to 38, 39 to 59, 63 to 83, 86 to 106, 125 to 145, and 182 to 202; these read ALVQ…ATNA, LGLG…VSAL, TPAE…VSAV, LINA…PLIV, WLSA…MFVL, and PFLL…MLAV.

It belongs to the NqrDE/RnfAE family. The complex is composed of six subunits: RsxA, RsxB, RsxC, RsxD, RsxE and RsxG.

The protein resides in the cell inner membrane. In terms of biological role, part of a membrane-bound complex that couples electron transfer with translocation of ions across the membrane. Required to maintain the reduced state of SoxR. The polypeptide is Ion-translocating oxidoreductase complex subunit E (Salmonella newport (strain SL254)).